The following is a 637-amino-acid chain: Threonine--tRNA ligase (637 aa).

The 61-residue stretch at 1-61 (MPVITLPDGS…DKDAELAIVT (61 aa)) folds into the TGS domain. Positions 242–533 (DHRKIGKKLG…LIEHYEGAFP (292 aa)) are catalytic. Zn(2+) is bound by residues Cys-333, His-384, and His-510.

It belongs to the class-II aminoacyl-tRNA synthetase family. In terms of assembly, homodimer. Zn(2+) serves as cofactor.

Its subcellular location is the cytoplasm. The catalysed reaction is tRNA(Thr) + L-threonine + ATP = L-threonyl-tRNA(Thr) + AMP + diphosphate + H(+). In terms of biological role, catalyzes the attachment of threonine to tRNA(Thr) in a two-step reaction: L-threonine is first activated by ATP to form Thr-AMP and then transferred to the acceptor end of tRNA(Thr). Also edits incorrectly charged L-seryl-tRNA(Thr). The protein is Threonine--tRNA ligase of Hahella chejuensis (strain KCTC 2396).